A 91-amino-acid polypeptide reads, in one-letter code: Potassium channel toxin TdiKIK (91 aa).

Residues 1 to 25 (MVATNRCCVFALLVALLLIHSLAEA) form the signal peptide. Positions 26 to 44 (GKGKEVLGKIKNKLVEVKE) are excised as a propeptide. Residues 58 to 91 (EYACPVIDKFCEDHCAAKNAIGKCDDFKCQCLNS) form the BetaSPN-type CS-alpha/beta domain. Cystine bridges form between C61/C81, C68/C86, and C72/C88.

As to expression, expressed by the venom gland.

The protein resides in the secreted. In terms of biological role, the full peptide presents antibacterial and cytotoxic activities. The synthetic C-terminus (AA 33-76) inhibits voltage-gated potassium channels Kv1.1/KCNA1, Kv1.2/KCNA2, and Kv1.3/KCNA3. In Tityus discrepans (Venezuelan scorpion), this protein is Potassium channel toxin TdiKIK.